Here is a 448-residue protein sequence, read N- to C-terminus: Elongation factor 1-alpha (448 aa).

The region spanning 5 to 230 is the tr-type G domain; the sequence is KIHISIVVIG…DQINEPKRPS (226 aa). The tract at residues 14 to 21 is G1; it reads GHVDSGKS. 14-21 provides a ligand contact to GTP; sequence GHVDSGKS. At K55 the chain carries N6,N6-dimethyllysine. Residues 70–74 form a G2 region; it reads GITID. Position 79 is an N6,N6,N6-trimethyllysine (K79). The interval 91–94 is G3; it reads DAPG. GTP is bound by residues 91-95 and 153-156; these read DAPGH and NKMD. The G4 stretch occupies residues 153 to 156; it reads NKMD. At K187 the chain carries N6,N6,N6-trimethyllysine. Residues 194 to 196 form a G5 region; the sequence is SGF. An N6-methyllysine modification is found at K261. The residue at position 289 (E289) is a 5-glutamyl glycerylphosphorylethanolamine. Residue K306 is modified to N6,N6,N6-trimethyllysine. The residue at position 362 (E362) is a 5-glutamyl glycerylphosphorylethanolamine. Residue K396 is modified to N6,N6,N6-trimethyllysine.

Belongs to the TRAFAC class translation factor GTPase superfamily. Classic translation factor GTPase family. EF-Tu/EF-1A subfamily.

The protein localises to the cytoplasm. In terms of biological role, this protein promotes the GTP-dependent binding of aminoacyl-tRNA to the A-site of ribosomes during protein biosynthesis. This is Elongation factor 1-alpha from Solanum lycopersicum (Tomato).